Here is a 48-residue protein sequence, read N- to C-terminus: Putative ATP synthase protein 8-like protein (48 aa).

A helical membrane pass occupies residues glycine 17–leucine 37.

It belongs to the ATPase protein 8 family.

The protein localises to the membrane. This Eremothecium gossypii (strain ATCC 10895 / CBS 109.51 / FGSC 9923 / NRRL Y-1056) (Yeast) protein is Putative ATP synthase protein 8-like protein.